Reading from the N-terminus, the 408-residue chain is Succinylornithine transaminase (408 aa).

An N6-(pyridoxal phosphate)lysine modification is found at lysine 252.

This sequence belongs to the class-III pyridoxal-phosphate-dependent aminotransferase family. AstC subfamily. The cofactor is pyridoxal 5'-phosphate.

The catalysed reaction is N(2)-succinyl-L-ornithine + 2-oxoglutarate = N-succinyl-L-glutamate 5-semialdehyde + L-glutamate. It functions in the pathway amino-acid degradation; L-arginine degradation via AST pathway; L-glutamate and succinate from L-arginine: step 3/5. Functionally, catalyzes the transamination of N(2)-succinylornithine and alpha-ketoglutarate into N(2)-succinylglutamate semialdehyde and glutamate. Can also act as an acetylornithine aminotransferase. The polypeptide is Succinylornithine transaminase (Salmonella dublin (strain CT_02021853)).